The sequence spans 251 residues: Hydroxyacylglutathione hydrolase (251 aa).

Zn(2+)-binding residues include H53, H55, D57, H58, H110, D127, and H165.

It belongs to the metallo-beta-lactamase superfamily. Glyoxalase II family. In terms of assembly, monomer. Requires Zn(2+) as cofactor.

It carries out the reaction an S-(2-hydroxyacyl)glutathione + H2O = a 2-hydroxy carboxylate + glutathione + H(+). Its pathway is secondary metabolite metabolism; methylglyoxal degradation; (R)-lactate from methylglyoxal: step 2/2. Its function is as follows. Thiolesterase that catalyzes the hydrolysis of S-D-lactoyl-glutathione to form glutathione and D-lactic acid. This Shigella boydii serotype 18 (strain CDC 3083-94 / BS512) protein is Hydroxyacylglutathione hydrolase.